The following is a 152-amino-acid chain: Ribosomal RNA large subunit methyltransferase H (152 aa).

Residues L70, G101, and 120–125 contribute to the S-adenosyl-L-methionine site; that span reads LSDLTF.

It belongs to the RNA methyltransferase RlmH family. In terms of assembly, homodimer.

The protein resides in the cytoplasm. It carries out the reaction pseudouridine(1915) in 23S rRNA + S-adenosyl-L-methionine = N(3)-methylpseudouridine(1915) in 23S rRNA + S-adenosyl-L-homocysteine + H(+). Functionally, specifically methylates the pseudouridine at position 1915 (m3Psi1915) in 23S rRNA. The protein is Ribosomal RNA large subunit methyltransferase H of Pseudothermotoga lettingae (strain ATCC BAA-301 / DSM 14385 / NBRC 107922 / TMO) (Thermotoga lettingae).